The primary structure comprises 200 residues: Large ribosomal subunit protein uL4 (200 aa).

The segment at 43–65 is disordered; it reads RAQKTRSEVSGGGAKPWRQKGTG.

It belongs to the universal ribosomal protein uL4 family. Part of the 50S ribosomal subunit.

Its function is as follows. One of the primary rRNA binding proteins, this protein initially binds near the 5'-end of the 23S rRNA. It is important during the early stages of 50S assembly. It makes multiple contacts with different domains of the 23S rRNA in the assembled 50S subunit and ribosome. Forms part of the polypeptide exit tunnel. This Aliivibrio salmonicida (strain LFI1238) (Vibrio salmonicida (strain LFI1238)) protein is Large ribosomal subunit protein uL4.